An 86-amino-acid polypeptide reads, in one-letter code: Small ribosomal subunit protein bS16 (86 aa).

The protein belongs to the bacterial ribosomal protein bS16 family.

This Xanthomonas campestris pv. campestris (strain 8004) protein is Small ribosomal subunit protein bS16.